We begin with the raw amino-acid sequence, 180 residues long: NAD(P)H-quinone oxidoreductase subunit I, chloroplastic (180 aa).

4Fe-4S ferredoxin-type domains follow at residues 55 to 84 (GRIH…VDWR) and 95 to 124 (LNYS…MTEE). Positions 64, 67, 70, 74, 104, 107, 110, and 114 each coordinate [4Fe-4S] cluster.

The protein belongs to the complex I 23 kDa subunit family. As to quaternary structure, NDH is composed of at least 16 different subunits, 5 of which are encoded in the nucleus. [4Fe-4S] cluster is required as a cofactor.

The protein resides in the plastid. The protein localises to the chloroplast thylakoid membrane. It carries out the reaction a plastoquinone + NADH + (n+1) H(+)(in) = a plastoquinol + NAD(+) + n H(+)(out). It catalyses the reaction a plastoquinone + NADPH + (n+1) H(+)(in) = a plastoquinol + NADP(+) + n H(+)(out). Functionally, NDH shuttles electrons from NAD(P)H:plastoquinone, via FMN and iron-sulfur (Fe-S) centers, to quinones in the photosynthetic chain and possibly in a chloroplast respiratory chain. The immediate electron acceptor for the enzyme in this species is believed to be plastoquinone. Couples the redox reaction to proton translocation, and thus conserves the redox energy in a proton gradient. This Drimys granadensis protein is NAD(P)H-quinone oxidoreductase subunit I, chloroplastic.